The following is a 356-amino-acid chain: Phenylalanine dehydrogenase (356 aa).

Arginine 43 is an NAD(+) binding site. Lysine 67 is a binding site for L-phenylalanine. Lysine 79 functions as the Proton donor/acceptor in the catalytic mechanism. 118–119 contributes to the L-phenylalanine binding site; sequence PD. NAD(+) is bound by residues aspartate 119, serine 150, threonine 154, 183 to 189, 206 to 207, arginine 211, 240 to 241, and 261 to 263; these read GLGAVGG, DT, AM, and AAN. Position 263 (asparagine 263) interacts with L-phenylalanine.

The protein belongs to the Glu/Leu/Phe/Val dehydrogenases family. In terms of assembly, homotetramer, dimer of dimers.

The enzyme catalyses L-phenylalanine + NAD(+) + H2O = 3-phenylpyruvate + NH4(+) + NADH + H(+). The protein operates within amino-acid biosynthesis; L-phenylalanine biosynthesis; L-phenylalanine from phenylpyruvate (PDH route): step 1/1. With respect to regulation, subject to competitive inhibition by 3-phenylpropionate for the conversion of L-phenylalanine to phenylpyruvate. Subject to competitive inhibition by D-phenylalanine for the conversion of phenylpyruvate to L-phenylalanine. Functionally, catalyzes the reversible NAD(+)-dependent oxidative deamination of L-phenylalanine to phenylpyruvate. The protein is Phenylalanine dehydrogenase of Rhodococcus sp.